The sequence spans 152 residues: MDSKVVIYTDGACAGNPGPGGWGALLQFNDTSKEVFGYELDTTNNRMEITAALEALRILKKSCNIEIYTDSKYLQQGITAWIHNWIKNNWCKSNNEPVKNADLWQKLYAELSKHTIIWKWVKGHANNSGNIAADKLAVQGRETAIEILKCRG.

An RNase H type-1 domain is found at 1 to 142; that stretch reads MDSKVVIYTD…ADKLAVQGRE (142 aa). 4 residues coordinate Mg(2+): aspartate 10, glutamate 48, aspartate 70, and aspartate 134.

This sequence belongs to the RNase H family. Monomer. Mg(2+) is required as a cofactor.

Its subcellular location is the cytoplasm. The catalysed reaction is Endonucleolytic cleavage to 5'-phosphomonoester.. Endonuclease that specifically degrades the RNA of RNA-DNA hybrids. This chain is Ribonuclease HI, found in Rickettsia conorii (strain ATCC VR-613 / Malish 7).